The sequence spans 451 residues: PTS system galactitol-specific EIIC component (451 aa).

The 430-residue stretch at 6–435 (MRYILDLGPT…IYLTGIFMTW (430 aa)) folds into the PTS EIIC type-2 domain. The next 10 membrane-spanning stretches (helical) occupy residues 9–29 (ILDL…SKIL), 41–61 (LHIG…LDSI), 92–112 (ASQI…AMLL), 138–158 (LATG…AFVY), 218–238 (FGPF…IGIL), 305–325 (AVVS…VCVP), 329–349 (VLPF…VAVH), 357–377 (LISG…TIGL), 392–412 (GMVA…IQVF), and 415–435 (QNIP…FMTW).

As to quaternary structure, forms a complex with one each of subunit of GatA, GatB and 2 subunits of GatC.

It is found in the cell inner membrane. Its function is as follows. The phosphoenolpyruvate-dependent sugar phosphotransferase system (PTS), a major carbohydrate active transport system, catalyzes the phosphorylation of incoming sugar substrates concomitant with their translocation across the cell membrane. The enzyme II complex composed of GatA, GatB and GatC is involved in galactitol transport. The polypeptide is PTS system galactitol-specific EIIC component (gatC) (Escherichia coli O157:H7).